The sequence spans 1131 residues: cGMP-specific 3',5'-cyclic phosphodiesterase (1131 aa).

Disordered stretches follow at residues 1 to 26 (MTDV…SAAT) and 42 to 150 (GVAP…SQQD). Low complexity predominate over residues 42–63 (GVAPGAVPGPGSAAIPASSSSG). A compositionally biased stretch (polar residues) spans 75-86 (SNNNRPAATNRS). Residues 110-136 (SSSTPSQSPSPSQSPSQASIQTQTSQQ) are compositionally biased toward low complexity. GAF domains lie at 255-412 (DIDV…GIGI) and 444-625 (NLEC…GLGI). The 324-residue stretch at 655-978 (SQDQTEKLTQ…RNWQDLAEKV (324 aa)) folds into the PDEase domain. Catalysis depends on His731, which acts as the Proton donor. A divalent metal cation-binding residues include His735, His771, Asp772, and Asp882. Disordered stretches follow at residues 1019–1048 (QQSQ…TGAL) and 1078–1131 (SHVS…CALL). Composition is skewed to basic and acidic residues over residues 1024–1035 (GSEDSHTPEHQR) and 1078–1088 (SHVSEDMDDKS). Positions 1097-1117 (ASGSMGRMSASSSTSSAGGQM) are enriched in low complexity. Residues 1121-1131 (SKKRSKLCALL) show a composition bias toward basic residues. Cysteine methyl ester is present on Cys1128. The S-farnesyl cysteine moiety is linked to residue Cys1128. A propeptide spans 1129-1131 (ALL) (removed in mature form).

This sequence belongs to the cyclic nucleotide phosphodiesterase family. In terms of assembly, interacts with PrBP. It depends on a divalent metal cation as a cofactor.

The protein resides in the cell membrane. It catalyses the reaction 3',5'-cyclic GMP + H2O = GMP + H(+). Its function is as follows. Has a role regulating cGMP transport in Malpighian tubule principal cells. The chain is cGMP-specific 3',5'-cyclic phosphodiesterase from Drosophila erecta (Fruit fly).